Here is a 316-residue protein sequence, read N- to C-terminus: Transaldolase (316 aa).

Lys-132 serves as the catalytic Schiff-base intermediate with substrate.

Belongs to the transaldolase family. Type 1 subfamily. As to quaternary structure, homodimer.

Its subcellular location is the cytoplasm. The catalysed reaction is D-sedoheptulose 7-phosphate + D-glyceraldehyde 3-phosphate = D-erythrose 4-phosphate + beta-D-fructose 6-phosphate. It participates in carbohydrate degradation; pentose phosphate pathway; D-glyceraldehyde 3-phosphate and beta-D-fructose 6-phosphate from D-ribose 5-phosphate and D-xylulose 5-phosphate (non-oxidative stage): step 2/3. Transaldolase is important for the balance of metabolites in the pentose-phosphate pathway. The polypeptide is Transaldolase (Aliivibrio fischeri (strain MJ11) (Vibrio fischeri)).